The sequence spans 290 residues: Protein MGF 110-9L (290 aa).

The next 3 helical transmembrane spans lie at 1-19, 128-148, and 163-183; these read MKVI…VIQS, TENI…IGYI, and LLIF…IIMN. N-linked (GlcNAc...) asparagine; by host glycans are attached at residues asparagine 242 and asparagine 267.

It belongs to the asfivirus MGF 110 family.

It localises to the host membrane. In terms of biological role, plays a role in virus cell tropism, and may be required for efficient virus replication in macrophages. This Ornithodoros (relapsing fever ticks) protein is Protein MGF 110-9L.